The sequence spans 248 residues: UPF0736 protein ABC2536 (248 aa).

This sequence belongs to the UPF0736 family.

The polypeptide is UPF0736 protein ABC2536 (Shouchella clausii (strain KSM-K16) (Alkalihalobacillus clausii)).